The following is a 375-amino-acid chain: Peptidyl-prolyl cis-trans isomerase D (375 aa).

Positions 7–169 (YFDITIANEP…QEVTISSAGV (163 aa)) constitute a PPIase cyclophilin-type domain. TPR repeat units lie at residues 217–250 (AGKL…LDVH), 270–307 (LPLL…PNLS), and 312–345 (GKAL…VPGD).

The protein belongs to the cyclophilin-type PPIase family. PPIase D subfamily.

Its subcellular location is the cytoplasm. The enzyme catalyses [protein]-peptidylproline (omega=180) = [protein]-peptidylproline (omega=0). In terms of biological role, PPIases accelerate the folding of proteins. It catalyzes the cis-trans isomerization of proline imidic peptide bonds in oligopeptides. In Cryptococcus neoformans var. neoformans serotype D (strain B-3501A) (Filobasidiella neoformans), this protein is Peptidyl-prolyl cis-trans isomerase D (CPR6).